The sequence spans 151 residues: 3-dehydroquinate dehydratase (151 aa).

Tyr-26 (proton acceptor) is an active-site residue. Residues Asn-75, His-81, and Asp-88 each contribute to the substrate site. The active-site Proton donor is His-101. Residues 102-103 and Arg-112 contribute to the substrate site; that span reads LS.

This sequence belongs to the type-II 3-dehydroquinase family. Homododecamer.

It carries out the reaction 3-dehydroquinate = 3-dehydroshikimate + H2O. The protein operates within metabolic intermediate biosynthesis; chorismate biosynthesis; chorismate from D-erythrose 4-phosphate and phosphoenolpyruvate: step 3/7. Functionally, catalyzes a trans-dehydration via an enolate intermediate. The protein is 3-dehydroquinate dehydratase of Shewanella denitrificans (strain OS217 / ATCC BAA-1090 / DSM 15013).